A 416-amino-acid polypeptide reads, in one-letter code: Succinate--CoA ligase [ADP-forming] subunit beta (416 aa).

Residues 1–14 (MLRMAPKTVGAVRN) constitute a hydrogenosome transit peptide. Residues Lys64, 71–73 (GRG), and Glu132 contribute to the ATP site. Mg(2+) contacts are provided by Asn224 and Asp242. Substrate contacts are provided by residues Asn293 and 350–352 (GIM).

The protein belongs to the succinate/malate CoA ligase beta subunit family. Heterodimer of an alpha and a beta subunit. The cofactor is Mg(2+).

Its subcellular location is the hydrogenosome. The catalysed reaction is succinate + ATP + CoA = succinyl-CoA + ADP + phosphate. It participates in carbohydrate metabolism; tricarboxylic acid cycle; succinate from succinyl-CoA (ligase route): step 1/1. Succinyl-CoA synthetase functions in the citric acid cycle (TCA), coupling the hydrolysis of succinyl-CoA to the synthesis of ATP and thus represents the only step of substrate-level phosphorylation in the TCA. The beta subunit provides nucleotide specificity of the enzyme and binds the substrate succinate, while the binding sites for coenzyme A and phosphate are found in the alpha subunit. In Blastocystis sp. subtype 1 (strain ATCC 50177 / NandII), this protein is Succinate--CoA ligase [ADP-forming] subunit beta (SCSb).